A 356-amino-acid polypeptide reads, in one-letter code: Pyruvate dehydrogenase E1 component subunit beta, mitochondrial (356 aa).

The transit peptide at 1 to 25 directs the protein to the mitochondrion; the sequence is MLSSILKKIQPSLLVNFRIITRTYA. Glu-85 lines the thiamine diphosphate pocket. Positions 138, 186, 187, 189, and 191 each coordinate K(+).

As to quaternary structure, tetramer of 2 alpha and 2 beta subunits. Thiamine diphosphate is required as a cofactor.

It localises to the mitochondrion matrix. It catalyses the reaction N(6)-[(R)-lipoyl]-L-lysyl-[protein] + pyruvate + H(+) = N(6)-[(R)-S(8)-acetyldihydrolipoyl]-L-lysyl-[protein] + CO2. Its function is as follows. The pyruvate dehydrogenase complex catalyzes the overall conversion of pyruvate to acetyl-CoA and CO(2). It contains multiple copies of three enzymatic components: pyruvate dehydrogenase (E1), dihydrolipoamide acetyltransferase (E2) and lipoamide dehydrogenase (E3). In Dictyostelium discoideum (Social amoeba), this protein is Pyruvate dehydrogenase E1 component subunit beta, mitochondrial (pdhB).